The following is a 508-amino-acid chain: Maturase K (508 aa).

This sequence belongs to the intron maturase 2 family. MatK subfamily.

Its subcellular location is the plastid. It localises to the chloroplast. In terms of biological role, usually encoded in the trnK tRNA gene intron. Probably assists in splicing its own and other chloroplast group II introns. The polypeptide is Maturase K (Stewartia pseudocamellia (Japanese stewartia)).